Here is a 581-residue protein sequence, read N- to C-terminus: Pentatricopeptide repeat-containing protein At3g56550 (581 aa).

PPR repeat units follow at residues 70–104 (STSD…SVSR), 106–140 (DLFT…GFLD), 141–171 (DAIV…MPVR), 172–206 (DLVS…GVCG), 207–241 (DSYT…RCES), 242–272 (CVFV…MRKR), 273–307 (DVLT…GVRP), 308–338 (NAIT…MSSQ), and 344–378 (NVKH…EDPV). A type E motif region spans residues 379 to 454 (LWRTLLGSCK…VPGWSWIEIG (76 aa)). The segment at 455–485 (DQVHKFVVDDKMHPESAVIYSELGEVINRAI) is type E(+) motif. The type DYW motif stretch occupies residues 486-581 (LAGYKPEDSN…DGICSCNDYW (96 aa)).

The protein belongs to the PPR family. PCMP-H subfamily.

In Arabidopsis thaliana (Mouse-ear cress), this protein is Pentatricopeptide repeat-containing protein At3g56550 (PCMP-H80).